The primary structure comprises 290 residues: Probable prolyl 4-hydroxylase 8 (290 aa).

At Met1–Gln19 the chain is on the cytoplasmic side. The helical; Signal-anchor for type II membrane protein transmembrane segment at Thr20–Phe40 threads the bilayer. Topologically, residues Ser41 to Asn290 are lumenal. The N-linked (GlcNAc...) asparagine glycan is linked to Asn46. A Fe2OG dioxygenase domain is found at Asn163–Val286. Fe cation contacts are provided by His181 and Asp183. N-linked (GlcNAc...) asparagine glycosylation is present at Asn222. His267 serves as a coordination point for Fe cation. Lys277 contributes to the 2-oxoglutarate binding site.

Belongs to the P4HA family. Fe(2+) is required as a cofactor. Requires L-ascorbate as cofactor.

It is found in the endoplasmic reticulum membrane. The enzyme catalyses L-prolyl-[collagen] + 2-oxoglutarate + O2 = trans-4-hydroxy-L-prolyl-[collagen] + succinate + CO2. Functionally, catalyzes the post-translational formation of 4-hydroxyproline in -Xaa-Pro-Gly- sequences in proline-rich peptide sequences of plant glycoproteins and other proteins. Hydroxyprolines are important constituent of many plant cell wall glycoproteins such as extensins, hydroxyproline-rich glycoproteins, lectins and arabinogalactan proteins. The polypeptide is Probable prolyl 4-hydroxylase 8 (Arabidopsis thaliana (Mouse-ear cress)).